A 168-amino-acid chain; its full sequence is Large ribosomal subunit protein uL10 (168 aa).

This sequence belongs to the universal ribosomal protein uL10 family. Part of the ribosomal stalk of the 50S ribosomal subunit. The N-terminus interacts with L11 and the large rRNA to form the base of the stalk. The C-terminus forms an elongated spine to which L12 dimers bind in a sequential fashion forming a multimeric L10(L12)X complex.

Functionally, forms part of the ribosomal stalk, playing a central role in the interaction of the ribosome with GTP-bound translation factors. The polypeptide is Large ribosomal subunit protein uL10 (Laribacter hongkongensis (strain HLHK9)).